A 1032-amino-acid chain; its full sequence is MTRIRRSPCLLLLIIWFMCIAGSVQVVQSQNQTGATTHPDEARALNSIFAAWKIQAPREWNISGELCSGAAIDASVLDSNPAYNPLIKCDCSFQNSTICRITNIKVYAIDVVGPIPPELWTLTYLTNLNLGQNVLTGSLPPAIGNLTRMQWMTFGINALSGPVPKEIGLLTDLRLLGISSNNFSGSIPDEIGRCTKLQQMYIDSSGLSGRIPLSFANLVQLEQAWIADLEVTDQIPDFIGDWTKLTTLRIIGTGLSGPIPSSFSNLTSLTELRLGDISSGSSSLDFIKDMKSLSVLVLRNNNLTGTIPSTIGEHSSLRQVDLSFNKLHGPIPASLFNLSQLTHLFLGNNTLNGSFPTQKTQSLRNVDVSYNDLSGSLPSWVSLPSLKLNLVANNFTLEGLDNRVLPGLNCLQKNFPCNRGKGIYSDFSINCGGPEKRSVTGALFEREDEDFGPASFFVSAGQRWAASSVGLFAGSSNNIYIATSQSQFVNTLDSELFQSARLSASSVRYYGLGLENGGYTVTLQFAEIQILGSTSTTWKGLGRRRFDIYVQGRLVEKDFDVRRTAGDSTVRAVQRVYKANVSENHLEVHLFWAGKGTCCIPIQGAYGPLISAVSATPDFTPTVANKPPSKGKNRTGTIVGVIVGVGLLSILAGVVMFTIRKRRKRYTDDEELLGMDVKPYIFTYSELKSATQDFDPSNKLGEGGFGPVYKGNLNDGRVVAVKLLSVGSRQGKGQFVAEIVAISSVLHRNLVKLYGCCFEGEHRMLVYEYLPNGSLDQALFGDKTLHLDWSTRYEICLGVARGLVYLHEEASVRIVHRDVKASNILLDSRLVPQISDFGLAKLYDDKKTHISTRVAGTIGYLAPEYAMRGHLTEKTDVYAFGVVALELVSGRPNSDENLEEEKKYLLEWAWNLHEKSRDIELIDDKLTDFNMEEAKRMIGIALLCTQTSHALRPPMSRVVAMLSGDVEIGDVTSKPGYVSDWRFDDTTGSSLSGFQIKDTTGYSMSLVAPGSEISPRDSDFKPMLGSKINEGR.

The first 29 residues, 1–29, serve as a signal peptide directing secretion; that stretch reads MTRIRRSPCLLLLIIWFMCIAGSVQVVQS. The Extracellular segment spans residues 30-636; sequence QNQTGATTHP…PPSKGKNRTG (607 aa). Residues N31, N61, and N95 are each glycosylated (N-linked (GlcNAc...) asparagine). LRR repeat units lie at residues 101–122, 123–146, 148–170, 171–194, 196–217, 242–265, 290–314, 315–338, 340–360, and 361–385; these read ITNI…LWTL, TYLT…IGNL, RMQW…IGLL, TDLR…IGRC, KLQQ…SFAN, WTKL…SFSN, MKSL…IGEH, SSLR…LFNL, QLTH…TQKT, and QSLR…SLPS. N-linked (GlcNAc...) asparagine glycosylation occurs at N145. The N-linked (GlcNAc...) asparagine glycan is linked to N182. Residues N265, N302, N337, N348, and N352 are each glycosylated (N-linked (GlcNAc...) asparagine). N-linked (GlcNAc...) asparagine glycans are attached at residues N394, N580, and N633. The helical transmembrane segment at 637–657 threads the bilayer; the sequence is TIVGVIVGVGLLSILAGVVMF. Residues 658-1032 are Cytoplasmic-facing; sequence TIRKRRKRYT…MLGSKINEGR (375 aa). T683 carries the post-translational modification Phosphothreonine. A Protein kinase domain is found at 694–968; sequence FDPSNKLGEG…VAMLSGDVEI (275 aa). ATP-binding positions include 700-708 and K722; that span reads LGEGGFGPV. At Y767 the chain carries Phosphotyrosine. D818 functions as the Proton acceptor in the catalytic mechanism. Phosphoserine occurs at positions 822 and 851. Phosphothreonine is present on residues T852 and T857. Y865 carries the phosphotyrosine modification. The interval 1008-1032 is disordered; that stretch reads APGSEISPRDSDFKPMLGSKINEGR.

It belongs to the protein kinase superfamily. Ser/Thr protein kinase family.

The protein resides in the cell membrane. The catalysed reaction is L-seryl-[protein] + ATP = O-phospho-L-seryl-[protein] + ADP + H(+). It carries out the reaction L-threonyl-[protein] + ATP = O-phospho-L-threonyl-[protein] + ADP + H(+). The protein is Probable LRR receptor-like serine/threonine-protein kinase At1g56130 of Arabidopsis thaliana (Mouse-ear cress).